Reading from the N-terminus, the 89-residue chain is Small ribosomal subunit protein uS17 (89 aa).

The protein belongs to the universal ribosomal protein uS17 family. Part of the 30S ribosomal subunit.

Functionally, one of the primary rRNA binding proteins, it binds specifically to the 5'-end of 16S ribosomal RNA. The protein is Small ribosomal subunit protein uS17 of Nocardia farcinica (strain IFM 10152).